The chain runs to 277 residues: MGIKFTKMHGLGNDFIVLDGVNQSIQLTVKQIQKLANRHTGIGFDQCLLIESSQTEGIDFNYRIFNADGQEVGQCGNGARCIALFARYYGLTAKNKLTVATKTTLMDLIINEDNSVSVNMGVPRLAPGEIPLLADRQSPEYSLELNNGNTVNLHAISIGNPHAVLLVENIDTAPVNSLGQQISFHPQFPEQVNVGFMQIVNHEKINLRVYERGCGETIACGSGAVAAAAIARLFYNLSDKITVHLPGGDLCIQWPCPTAPIILTGPAAFVYEGTLLS.

Substrate is bound by residues Asn13, Gln46, and Asn66. Cys75 acts as the Proton donor in catalysis. Residues 76–77 (GN), Asn160, Asn193, and 211–212 (ER) contribute to the substrate site. The Proton acceptor role is filled by Cys220. Residue 221–222 (GS) participates in substrate binding.

The protein belongs to the diaminopimelate epimerase family. In terms of assembly, homodimer.

The protein localises to the cytoplasm. It carries out the reaction (2S,6S)-2,6-diaminopimelate = meso-2,6-diaminopimelate. Its pathway is amino-acid biosynthesis; L-lysine biosynthesis via DAP pathway; DL-2,6-diaminopimelate from LL-2,6-diaminopimelate: step 1/1. In terms of biological role, catalyzes the stereoinversion of LL-2,6-diaminopimelate (L,L-DAP) to meso-diaminopimelate (meso-DAP), a precursor of L-lysine and an essential component of the bacterial peptidoglycan. In Legionella pneumophila (strain Paris), this protein is Diaminopimelate epimerase.